Reading from the N-terminus, the 63-residue chain is Large ribosomal subunit protein bL32 (63 aa).

The tract at residues 1–23 (MATPKAKVSKSRRDKRRAQFTAR) is disordered. Residues 7–18 (KVSKSRRDKRRA) are compositionally biased toward basic residues.

Belongs to the bacterial ribosomal protein bL32 family.

This is Large ribosomal subunit protein bL32 from Prosthecochloris aestuarii (strain DSM 271 / SK 413).